The sequence spans 377 residues: Queuine tRNA-ribosyltransferase (377 aa).

Asp94 acts as the Proton acceptor in catalysis. Substrate contacts are provided by residues 94–98 (DSGGF), Asp148, Gln191, and Gly218. An RNA binding region spans residues 249 to 255 (GVGTPDD). The Nucleophile role is filled by Asp268. The segment at 273 to 277 (TRAGR) is RNA binding; important for wobble base 34 recognition.

This sequence belongs to the queuine tRNA-ribosyltransferase family. Homodimer. Within each dimer, one monomer is responsible for RNA recognition and catalysis, while the other monomer binds to the replacement base PreQ1.

The enzyme catalyses 7-aminomethyl-7-carbaguanine + guanosine(34) in tRNA = 7-aminomethyl-7-carbaguanosine(34) in tRNA + guanine. Its pathway is tRNA modification; tRNA-queuosine biosynthesis. In terms of biological role, catalyzes the base-exchange of a guanine (G) residue with the queuine precursor 7-aminomethyl-7-deazaguanine (PreQ1) at position 34 (anticodon wobble position) in tRNAs with GU(N) anticodons (tRNA-Asp, -Asn, -His and -Tyr). Catalysis occurs through a double-displacement mechanism. The nucleophile active site attacks the C1' of nucleotide 34 to detach the guanine base from the RNA, forming a covalent enzyme-RNA intermediate. The proton acceptor active site deprotonates the incoming PreQ1, allowing a nucleophilic attack on the C1' of the ribose to form the product. After dissociation, two additional enzymatic reactions on the tRNA convert PreQ1 to queuine (Q), resulting in the hypermodified nucleoside queuosine (7-(((4,5-cis-dihydroxy-2-cyclopenten-1-yl)amino)methyl)-7-deazaguanosine). This Brucella suis biovar 1 (strain 1330) protein is Queuine tRNA-ribosyltransferase.